Here is a 524-residue protein sequence, read N- to C-terminus: Probable plastidic glucose transporter 1 (524 aa).

The next 12 membrane-spanning stretches (helical) occupy residues 88–108, 122–142, 151–171, 179–199, 208–228, 239–259, 320–340, 357–377, 386–406, 420–440, 452–472, and 483–503; these read MANF…VSIA, LVVS…GPLV, FQIF…AHSL, FLVG…ISEV, LGTL…LLGI, TMLY…QFAV, VAFI…NGVL, QASL…SYLI, LIGS…AVGF, GTLM…GLII, IMGF…LFFL, and VYAS…LFTV.

This sequence belongs to the major facilitator superfamily. Sugar transporter (TC 2.A.1.1) family.

Its subcellular location is the plastid. The protein resides in the chloroplast membrane. In terms of biological role, may be involved in the efflux of glucose towards the cytosol. The polypeptide is Probable plastidic glucose transporter 1 (Arabidopsis thaliana (Mouse-ear cress)).